We begin with the raw amino-acid sequence, 441 residues long: MSEISRQEFQRRRQALVEQMQPGSAALIFAAPEVTRSADSEYPYRQNSDFWYFTGFNEPEAVLVLIKSDDTHNHSVLFNRVRDLTAEIWFGRRLGQDAAPEKLGVDRALAFSEINQQLYQLLNGLDVVYHAQGEYAYADVIVNSALEKLRKGSRQNLTAPATMIDWRPVVHEMRLFKSPEEIAVLRRAGEITAMAHTRAMEKCRPGMFEYHLEGEIHHEFNRHGARYPSYNTIVGSGENGCILHYTENECEMRDGDLVLIDAGCEYKGYAGDITRTFPVNGKFTQAQREIYDIVLESLETSLRLYRPGTSILEVTGEVVRIMVSGLVKLGILKGDVDELIAQNAHRPFFMHGLSHWLGLDVHDVGVYGQDRSRILEPGMVLTVEPGLYIAPDAEVPEQYRGIGIRIEDDIVITETGNENLTASVVKKPEEIEALMVAARKQ.

D261, D272, H355, E384, and E407 together coordinate Mn(2+).

Belongs to the peptidase M24B family. Homotetramer. Requires Mn(2+) as cofactor.

Its subcellular location is the cytoplasm. The enzyme catalyses Release of any N-terminal amino acid, including proline, that is linked to proline, even from a dipeptide or tripeptide.. The protein is Xaa-Pro aminopeptidase (pepP) of Escherichia coli (strain K12).